A 142-amino-acid polypeptide reads, in one-letter code: Hemoglobin subunit beta-2 (142 aa).

Residues 2–142 (SLTDEEKHLI…VTEALSCQYH (141 aa)) form the Globin domain. 2 residues coordinate heme b: histidine 59 and histidine 88.

The protein belongs to the globin family. As to quaternary structure, heterotetramer of two alpha chains and two beta chains. Red blood cells.

Functionally, involved in oxygen transport from the lung to the various peripheral tissues. This chain is Hemoglobin subunit beta-2 (HBB2), found in Torpedo marmorata (Marbled electric ray).